Here is a 900-residue protein sequence, read N- to C-terminus: Alanine--tRNA ligase (900 aa).

Residues histidine 604, histidine 608, cysteine 708, and histidine 712 each coordinate Zn(2+).

It belongs to the class-II aminoacyl-tRNA synthetase family. It depends on Zn(2+) as a cofactor.

The protein localises to the cytoplasm. It catalyses the reaction tRNA(Ala) + L-alanine + ATP = L-alanyl-tRNA(Ala) + AMP + diphosphate. In terms of biological role, catalyzes the attachment of alanine to tRNA(Ala) in a two-step reaction: alanine is first activated by ATP to form Ala-AMP and then transferred to the acceptor end of tRNA(Ala). Also edits incorrectly charged Ser-tRNA(Ala) and Gly-tRNA(Ala) via its editing domain. This chain is Alanine--tRNA ligase, found in Saccharolobus islandicus (strain L.S.2.15 / Lassen #1) (Sulfolobus islandicus).